The sequence spans 358 residues: tRNA-specific 2-thiouridylase MnmA (358 aa).

Residues 8-15 (GMSGGVDS) and methionine 34 contribute to the ATP site. The active-site Nucleophile is cysteine 103. A disulfide bridge links cysteine 103 with cysteine 199. Glycine 127 provides a ligand contact to ATP. Positions 149 to 151 (KDQ) are interaction with tRNA. Cysteine 199 (cysteine persulfide intermediate) is an active-site residue. Residues 305–306 (RY) are interaction with tRNA.

This sequence belongs to the MnmA/TRMU family.

The protein resides in the cytoplasm. It catalyses the reaction S-sulfanyl-L-cysteinyl-[protein] + uridine(34) in tRNA + AH2 + ATP = 2-thiouridine(34) in tRNA + L-cysteinyl-[protein] + A + AMP + diphosphate + H(+). Catalyzes the 2-thiolation of uridine at the wobble position (U34) of tRNA, leading to the formation of s(2)U34. The polypeptide is tRNA-specific 2-thiouridylase MnmA (Clostridium beijerinckii (strain ATCC 51743 / NCIMB 8052) (Clostridium acetobutylicum)).